We begin with the raw amino-acid sequence, 483 residues long: PAT complex subunit CCDC47 (483 aa).

Positions 1–20 (MKGFHAFCVILLIFGSVSEA) are cleaved as a signal peptide. Residues 21 to 135 (KFDDFEDEED…PAHLQNSWES (115 aa)) lie on the Cytoplasmic side of the membrane. Residues 44 to 118 (DVAEDSVTES…PDTSSSKSKD (75 aa)) form a disordered region. Positions 60-104 (TEDDEDETTVELEGQDESQEGDFEDADTQEGDTESEPYDDEEFEG) are enriched in acidic residues. A compositionally biased stretch (basic and acidic residues) spans 105 to 118 (YEDKPDTSSSKSKD). A helical membrane pass occupies residues 136 to 156 (YYLEILMVTGLLAYIMNYIIG). The Lumenal segment spans residues 157-483 (KNKNSRLAQA…KMKQIKVKAM (327 aa)). N-linked (GlcNAc...) asparagine glycosylation occurs at asparagine 178. The interval 424–483 (QRQEAAQSRREEKKRAEKERIMNEEDPEKQRRLEEAALRREQKKLEKKQMKMKQIKVKAM) is disordered. A compositionally biased stretch (basic and acidic residues) spans 430–472 (QSRREEKKRAEKERIMNEEDPEKQRRLEEAALRREQKKLEKKQ). The stretch at 450-483 (PEKQRRLEEAALRREQKKLEKKQMKMKQIKVKAM) forms a coiled coil. Residues 473-483 (MKMKQIKVKAM) show a composition bias toward basic residues.

Belongs to the CCDC47 family. In terms of assembly, component of the PAT complex, composed of WDR83OS/Asterix and CCDC47. The PAT complex is part of the multi-pass translocon (MPT) complex, composed of three subcomplexes, the GEL complex (composed of RAB5IF/OPTI and TMCO1), the BOS complex (composed of NCLN/Nicalin, NOMO1 and TMEM147) and the PAT complex (composed of WDR83OS/Asterix and CCDC47). The MPT complex associates with the SEC61 complex. Interacts with VCP, HSPA5, DERL1, DERL2 and SELENOS.

The protein resides in the endoplasmic reticulum membrane. It localises to the rough endoplasmic reticulum membrane. In terms of biological role, component of the multi-pass translocon (MPT) complex that mediates insertion of multi-pass membrane proteins into the lipid bilayer of membranes. The MPT complex takes over after the SEC61 complex: following membrane insertion of the first few transmembrane segments of proteins by the SEC61 complex, the MPT complex occludes the lateral gate of the SEC61 complex to promote insertion of subsequent transmembrane regions. Within the MPT complex, the PAT subcomplex sequesters any highly polar regions in the transmembrane domains away from the non-polar membrane environment until they can be buried in the interior of the fully assembled protein. Within the PAT subcomplex, CCDC47 occludes the lateral gate of the SEC61 complex. Involved in the regulation of calcium ion homeostasis in the ER. Required for proper protein degradation via the ERAD (ER-associated degradation) pathway. Has an essential role in the maintenance of ER organization during embryogenesis. The sequence is that of PAT complex subunit CCDC47 (CCDC47) from Bos taurus (Bovine).